The primary structure comprises 205 residues: Small ribosomal subunit protein uS4 (205 aa).

Residues 19-45 are disordered; the sequence is IWGRSKSPVNRREYGPGQHGQRRKGKL. In terms of domain architecture, S4 RNA-binding spans 94–157; the sequence is RRLDAVVYRA…KQMALVLEAV (64 aa).

The protein belongs to the universal ribosomal protein uS4 family. In terms of assembly, part of the 30S ribosomal subunit. Contacts protein S5. The interaction surface between S4 and S5 is involved in control of translational fidelity.

One of the primary rRNA binding proteins, it binds directly to 16S rRNA where it nucleates assembly of the body of the 30S subunit. Its function is as follows. With S5 and S12 plays an important role in translational accuracy. This is Small ribosomal subunit protein uS4 from Azorhizobium caulinodans (strain ATCC 43989 / DSM 5975 / JCM 20966 / LMG 6465 / NBRC 14845 / NCIMB 13405 / ORS 571).